The following is a 231-amino-acid chain: Cytochrome c oxidase assembly factor 7 (231 aa).

Residue alanine 2 is modified to N-acetylalanine. 5 Sel1-like repeats span residues 34–66, 68–104, 108–146, 147–183, and 184–219; these read PEGC…EKYG, GDSC…EKPG, VESC…DGGY, AASC…DLGH, and VWAC…QLHK.

This sequence belongs to the hcp beta-lactamase family. In terms of assembly, interacts with CHCHD4/MIA40 through transient intermolecular disulfide bonds.

The protein localises to the mitochondrion intermembrane space. Its function is as follows. Required for assembly of mitochondrial respiratory chain complex I and complex IV. In Mus musculus (Mouse), this protein is Cytochrome c oxidase assembly factor 7 (Coa7).